The following is a 482-amino-acid chain: Glutamyl-tRNA(Gln) amidotransferase subunit A (482 aa).

Active-site charge relay system residues include Lys-75 and Ser-150. Residue Ser-174 is the Acyl-ester intermediate of the active site.

Belongs to the amidase family. GatA subfamily. In terms of assembly, heterotrimer of A, B and C subunits.

The enzyme catalyses L-glutamyl-tRNA(Gln) + L-glutamine + ATP + H2O = L-glutaminyl-tRNA(Gln) + L-glutamate + ADP + phosphate + H(+). Allows the formation of correctly charged Gln-tRNA(Gln) through the transamidation of misacylated Glu-tRNA(Gln) in organisms which lack glutaminyl-tRNA synthetase. The reaction takes place in the presence of glutamine and ATP through an activated gamma-phospho-Glu-tRNA(Gln). The polypeptide is Glutamyl-tRNA(Gln) amidotransferase subunit A (Deinococcus radiodurans (strain ATCC 13939 / DSM 20539 / JCM 16871 / CCUG 27074 / LMG 4051 / NBRC 15346 / NCIMB 9279 / VKM B-1422 / R1)).